Reading from the N-terminus, the 132-residue chain is ATP synthase epsilon chain, cyanelle (132 aa).

It belongs to the ATPase epsilon chain family. F-type ATPases have 2 components, CF(1) - the catalytic core - and CF(0) - the membrane proton channel. CF(1) has five subunits: alpha(3), beta(3), gamma(1), delta(1), epsilon(1). CF(0) has three main subunits: a, b and c.

It is found in the plastid. The protein resides in the cyanelle thylakoid membrane. In terms of biological role, produces ATP from ADP in the presence of a proton gradient across the membrane. This is ATP synthase epsilon chain, cyanelle from Cyanophora paradoxa.